The sequence spans 129 residues: Sulfurtransferase TusD (129 aa).

Cys79 acts as the Cysteine persulfide intermediate in catalysis.

The protein belongs to the DsrE/TusD family. Heterohexamer, formed by a dimer of trimers. The hexameric TusBCD complex contains 2 copies each of TusB, TusC and TusD. The TusBCD complex interacts with TusE.

It is found in the cytoplasm. In terms of biological role, part of a sulfur-relay system required for 2-thiolation of 5-methylaminomethyl-2-thiouridine (mnm(5)s(2)U) at tRNA wobble positions. Accepts sulfur from TusA and transfers it in turn to TusE. The polypeptide is Sulfurtransferase TusD (Serratia proteamaculans (strain 568)).